The primary structure comprises 213 residues: Large ribosomal subunit protein uL1 (213 aa).

It belongs to the universal ribosomal protein uL1 family. As to quaternary structure, part of the 50S ribosomal subunit.

In terms of biological role, binds directly to 23S rRNA. Probably involved in E site tRNA release. Its function is as follows. Protein L1 is also a translational repressor protein, it controls the translation of its operon by binding to its mRNA. The sequence is that of Large ribosomal subunit protein uL1 from Methanococcus maripaludis (strain DSM 14266 / JCM 13030 / NBRC 101832 / S2 / LL).